Reading from the N-terminus, the 86-residue chain is MKTLLLSLVMVGFMYLVSGQNRTCRSCTGALCLKIEQCKEGQNLCFERKITDDFFGMKTVRGCADTCANPGENEKVTYCSTDNCNS.

The signal sequence occupies residues 1–19 (MKTLLLSLVMVGFMYLVSG). 3 cysteine pairs are disulfide-bonded: Cys-24/Cys-45, Cys-38/Cys-63, and Cys-79/Cys-84.

This sequence belongs to the three-finger toxin family. Ancestral subfamily. In terms of tissue distribution, expressed by the venom gland.

The protein localises to the secreted. The sequence is that of Toxin 3FTx-Dis4 from Dispholidus typus (Boomslang).